Here is a 386-residue protein sequence, read N- to C-terminus: Alkanesulfonate monooxygenase (386 aa).

It belongs to the SsuD family.

It catalyses the reaction an alkanesulfonate + FMNH2 + O2 = an aldehyde + FMN + sulfite + H2O + 2 H(+). Functionally, catalyzes the desulfonation of aliphatic sulfonates. This Delftia acidovorans (strain DSM 14801 / SPH-1) protein is Alkanesulfonate monooxygenase.